Reading from the N-terminus, the 93-residue chain is Serine rich endogenous peptide 6 (93 aa).

The signal sequence occupies residues 1-27 (MGTKCYSKLRYVVVLVLLLFVFPCSLS). 2 short sequence motifs (SCOOP motif) span residues 48–62 (GIIA…APNI) and 73–87 (ISEA…GGGR). A disordered region spans residues 52-93 (GSSPSGQAPNINNNYHGRRLMISEARPSKSKKGGGREPESPG). Polar residues predominate over residues 53–66 (SSPSGQAPNINNNY). 2 consecutive short sequence motifs (sxS motif essential for MIK2 binding) follow at residues 54-56 (SPS) and 79-81 (SKS).

Belongs to the serine rich endogenous peptide (SCOOP) phytocytokine family. As to quaternary structure, interacts with MIK2 (via extracellular leucine-rich repeat domain); this interaction triggers the formation of complex between MIK2 and the BAK1/SERK3 and SERK4 coreceptors, and subsequent BAK1 activation by phosphorylation. In terms of tissue distribution, mostly expressed in seedlings shoots, and, to a lower extent, in roots.

It localises to the cell membrane. It is found in the secreted. The protein resides in the extracellular space. The protein localises to the apoplast. Functionally, brassicaceae-specific phytocytokine (plant endogenous peptide released into the apoplast) perceived by MIK2 in a BAK1/SERK3 and SERK4 coreceptors-dependent manner, that modulates various physiological and antimicrobial processes including growth prevention and reactive oxygen species (ROS) response regulation. Inhibits root growth. The polypeptide is Serine rich endogenous peptide 6 (Arabidopsis thaliana (Mouse-ear cress)).